A 309-amino-acid polypeptide reads, in one-letter code: Foldase protein PrsA 2 (309 aa).

The N-terminal stretch at 1–22 (MKQMNKLITGVVTLATVVTLSA) is a signal peptide. C23 is lipidated: N-palmitoyl cysteine. C23 is lipidated: S-diacylglycerol cysteine. The PpiC domain occupies 146–241 (TPTMTAEIMQ…RTYHIIKVTK (96 aa)).

Belongs to the PrsA family.

It localises to the cell membrane. The enzyme catalyses [protein]-peptidylproline (omega=180) = [protein]-peptidylproline (omega=0). Functionally, plays a major role in protein secretion by helping the post-translocational extracellular folding of several secreted proteins. The chain is Foldase protein PrsA 2 (prsA2) from Streptococcus pyogenes serotype M3 (strain ATCC BAA-595 / MGAS315).